We begin with the raw amino-acid sequence, 365 residues long: Ribosomal RNA large subunit methyltransferase M (365 aa).

S-adenosyl-L-methionine is bound by residues Ser188, 221-224, Asp240, Asp260, and Asp277; that span reads CPGG. Lys306 acts as the Proton acceptor in catalysis.

Belongs to the class I-like SAM-binding methyltransferase superfamily. RNA methyltransferase RlmE family. RlmM subfamily. As to quaternary structure, monomer.

The protein localises to the cytoplasm. The catalysed reaction is cytidine(2498) in 23S rRNA + S-adenosyl-L-methionine = 2'-O-methylcytidine(2498) in 23S rRNA + S-adenosyl-L-homocysteine + H(+). Functionally, catalyzes the 2'-O-methylation at nucleotide C2498 in 23S rRNA. The polypeptide is Ribosomal RNA large subunit methyltransferase M (Proteus mirabilis (strain HI4320)).